The following is a 442-amino-acid chain: tRNA-2-methylthio-N(6)-dimethylallyladenosine synthase (442 aa).

In terms of domain architecture, MTTase N-terminal spans 6 to 122 (RKFYIHTFGC…LPALIAEAGD (117 aa)). Positions 15, 51, 85, 157, 161, and 164 each coordinate [4Fe-4S] cluster. The region spanning 143-373 (RTQSLNAFVP…IDLQNGISAE (231 aa)) is the Radical SAM core domain. The TRAM domain occupies 376-439 (GLAPGSVVEV…SATLFGQSAE (64 aa)).

It belongs to the methylthiotransferase family. MiaB subfamily. In terms of assembly, monomer. It depends on [4Fe-4S] cluster as a cofactor.

Its subcellular location is the cytoplasm. The catalysed reaction is N(6)-dimethylallyladenosine(37) in tRNA + (sulfur carrier)-SH + AH2 + 2 S-adenosyl-L-methionine = 2-methylsulfanyl-N(6)-dimethylallyladenosine(37) in tRNA + (sulfur carrier)-H + 5'-deoxyadenosine + L-methionine + A + S-adenosyl-L-homocysteine + 2 H(+). Catalyzes the methylthiolation of N6-(dimethylallyl)adenosine (i(6)A), leading to the formation of 2-methylthio-N6-(dimethylallyl)adenosine (ms(2)i(6)A) at position 37 in tRNAs that read codons beginning with uridine. The protein is tRNA-2-methylthio-N(6)-dimethylallyladenosine synthase of Chlorobium phaeobacteroides (strain DSM 266 / SMG 266 / 2430).